A 114-amino-acid chain; its full sequence is Hydrogenase maturation factor HypA (114 aa).

Residue His2 coordinates Ni(2+). Zn(2+) contacts are provided by Cys73, Cys76, Cys89, and Cys92.

Belongs to the HypA/HybF family.

Functionally, involved in the maturation of [NiFe] hydrogenases. Required for nickel insertion into the metal center of the hydrogenase. In Psychromonas ingrahamii (strain DSM 17664 / CCUG 51855 / 37), this protein is Hydrogenase maturation factor HypA.